A 362-amino-acid polypeptide reads, in one-letter code: Variable large protein 25 (362 aa).

The first 26 residues, 1 to 26, serve as a signal peptide directing secretion; the sequence is MRKRISAIINKLNISIMMMIVVLMIG. Residue Cys27 is the site of N-palmitoyl cysteine attachment. Residue Cys27 is the site of S-diacylglycerol cysteine attachment.

It belongs to the variable large protein (Vlp) family. Alpha subfamily.

The protein resides in the cell outer membrane. Its function is as follows. The Vlp and Vsp proteins are antigenically distinct proteins, only one vlp or vsp gene is transcriptionally active at any one time. Switching between these genes is a mechanism of host immune response evasion. In Borrelia hermsii, this protein is Variable large protein 25.